A 382-amino-acid polypeptide reads, in one-letter code: Mannitol-1-phosphate 5-dehydrogenase (382 aa).

NAD(+) is bound at residue 3 to 14 (ALHFGAGNIGRG). An N6-acetyllysine modification is found at Lys269.

The protein belongs to the mannitol dehydrogenase family.

The enzyme catalyses D-mannitol 1-phosphate + NAD(+) = beta-D-fructose 6-phosphate + NADH + H(+). The sequence is that of Mannitol-1-phosphate 5-dehydrogenase from Escherichia coli O81 (strain ED1a).